Consider the following 475-residue polypeptide: Ribulose bisphosphate carboxylase large chain (475 aa).

Positions 1 to 2 (MA) are excised as a propeptide. The residue at position 3 (proline 3) is an N-acetylproline. An N6,N6,N6-trimethyllysine modification is found at lysine 14. 2 residues coordinate substrate: asparagine 123 and threonine 173. Lysine 175 serves as the catalytic Proton acceptor. Lysine 177 lines the substrate pocket. Residues lysine 201, aspartate 203, and glutamate 204 each contribute to the Mg(2+) site. Lysine 201 bears the N6-carboxylysine mark. Catalysis depends on histidine 294, which acts as the Proton acceptor. Residues arginine 295, histidine 327, and serine 379 each contribute to the substrate site.

Belongs to the RuBisCO large chain family. Type I subfamily. Heterohexadecamer of 8 large chains and 8 small chains. The cofactor is Mg(2+).

It is found in the plastid. The protein resides in the chloroplast. It catalyses the reaction 2 (2R)-3-phosphoglycerate + 2 H(+) = D-ribulose 1,5-bisphosphate + CO2 + H2O. The catalysed reaction is D-ribulose 1,5-bisphosphate + O2 = 2-phosphoglycolate + (2R)-3-phosphoglycerate + 2 H(+). In terms of biological role, ruBisCO catalyzes two reactions: the carboxylation of D-ribulose 1,5-bisphosphate, the primary event in carbon dioxide fixation, as well as the oxidative fragmentation of the pentose substrate in the photorespiration process. Both reactions occur simultaneously and in competition at the same active site. The protein is Ribulose bisphosphate carboxylase large chain of Nephroselmis olivacea (Green alga).